The following is a 365-amino-acid chain: Validamycin A dioxygenase (365 aa).

A Fe2OG dioxygenase domain is found at 174-284 (HATWTQSVNW…LVSLVYFFDA (111 aa)). The Fe cation site is built by His203, Asp205, and His261. The tract at residues 331–365 (GELSLSRPGSADSPGSSPADDHPSRPGRHPAQGPQ) is disordered. Over residues 336 to 348 (SRPGSADSPGSSP) the composition is skewed to low complexity.

This sequence belongs to the iron/ascorbate-dependent oxidoreductase family. Fe(2+) serves as cofactor.

It catalyses the reaction validamycin A + 2-oxoglutarate + O2 = validamycin B + succinate + CO2 + H(+). It carries out the reaction validoxylamine A + 2-oxoglutarate + O2 = validoxylamine B + succinate + CO2 + H(+). It participates in antibiotic biosynthesis. Functionally, involved in the biosynthesis of validamycin B, a component of the antifungal and antibiotic validamycin complex used as a crop protectant. Catalyzes the regioselective hydroxylation of validamycin A (4-O-beta-D-glucopyranosyl-validoxylamine A) at the C-6 position to yield validamycin B. To a lesser extent, also able to convert validoxylamine A to its hydroxylated derivative. The chain is Validamycin A dioxygenase from Streptomyces hygroscopicus subsp. limoneus.